The following is a 263-amino-acid chain: N-glycosylase/DNA lyase (263 aa).

3 residues coordinate 8-oxoguanine: Gln43, Ser71, and Trp82. The tract at residues Arg139–Glu204 is helix-hairpin-helix. The active-site Schiff-base intermediate with DNA is the Lys164. 8-oxoguanine contacts are provided by Phe168 and Pro194. Residue Asp196 is part of the active site. Asp230 and Trp234 together coordinate 8-oxoguanine.

This sequence belongs to the archaeal N-glycosylase/DNA lyase (AGOG) family.

The enzyme catalyses 2'-deoxyribonucleotide-(2'-deoxyribose 5'-phosphate)-2'-deoxyribonucleotide-DNA = a 3'-end 2'-deoxyribonucleotide-(2,3-dehydro-2,3-deoxyribose 5'-phosphate)-DNA + a 5'-end 5'-phospho-2'-deoxyribonucleoside-DNA + H(+). DNA repair enzyme that is part of the base excision repair (BER) pathway; protects from oxidative damage by removing the major product of DNA oxidation, 8-oxoguanine (GO), from single- and double-stranded DNA substrates. The polypeptide is N-glycosylase/DNA lyase (Thermococcus kodakarensis (strain ATCC BAA-918 / JCM 12380 / KOD1) (Pyrococcus kodakaraensis (strain KOD1))).